The following is a 190-amino-acid chain: Hypoxanthine/guanine phosphoribosyltransferase (190 aa).

It belongs to the purine/pyrimidine phosphoribosyltransferase family. Archaeal HPRT subfamily. As to quaternary structure, homodimer.

It is found in the cytoplasm. The catalysed reaction is IMP + diphosphate = hypoxanthine + 5-phospho-alpha-D-ribose 1-diphosphate. It carries out the reaction GMP + diphosphate = guanine + 5-phospho-alpha-D-ribose 1-diphosphate. Its pathway is purine metabolism; IMP biosynthesis via salvage pathway; IMP from hypoxanthine: step 1/1. Functionally, catalyzes a salvage reaction resulting in the formation of IMP that is energically less costly than de novo synthesis. This chain is Hypoxanthine/guanine phosphoribosyltransferase, found in Methanobacterium lacus (strain AL-21).